The following is a 95-amino-acid chain: uncharacterized protein (95 aa).

Basic and acidic residues-rich tracts occupy residues 1–28 (MRRA…KERC) and 41–53 (DERV…KGRP). A disordered region spans residues 1 to 73 (MRRAEVKRSA…RTSRAGSSWQ (73 aa)).

This is an uncharacterized protein from Homo sapiens (Human).